Consider the following 235-residue polypeptide: Vacuolar protein sorting-associated protein 60.2 (235 aa).

A disordered region spans residues 1-30 (MKRIFGAKNNKEPPPSIQDASDRINKRGDS). Positions 20 to 30 (ASDRINKRGDS) are enriched in basic and acidic residues. Residues 99–148 (LKDAQQTMTALKSANKELKGMMKTVKIQDIDNLQDDMMDLMDESSEIQET) are a coiled coil. The segment at 174–235 (DMGNETEADG…PAVPRASLRG (62 aa)) is disordered.

It belongs to the SNF7 family.

The protein localises to the endosome. It localises to the multivesicular body membrane. In terms of biological role, probable peripherally associated component of the endosomal sorting required for transport complex III (ESCRT-III) which is involved in multivesicular bodies (MVBs) formation and sorting of endosomal cargo proteins into MVBs. The polypeptide is Vacuolar protein sorting-associated protein 60.2 (Arabidopsis thaliana (Mouse-ear cress)).